Reading from the N-terminus, the 151-residue chain is Ribosome maturation factor RimP (151 aa).

Belongs to the RimP family.

It is found in the cytoplasm. Functionally, required for maturation of 30S ribosomal subunits. This chain is Ribosome maturation factor RimP, found in Caldanaerobacter subterraneus subsp. tengcongensis (strain DSM 15242 / JCM 11007 / NBRC 100824 / MB4) (Thermoanaerobacter tengcongensis).